Reading from the N-terminus, the 247-residue chain is Syntaxin-like protein fsv1 (247 aa).

A coiled-coil region spans residues Asn-27 to Ile-94. The tract at residues Gln-88–Gly-130 is disordered. Over residues Ser-100 to Gly-130 the composition is skewed to polar residues. Residues Gln-159 to Val-221 enclose the t-SNARE coiled-coil homology domain.

The protein resides in the golgi apparatus membrane. It is found in the prevacuolar compartment membrane. Functionally, involved in vesicle-mediated protein transport between the Golgi and the vacuole. The sequence is that of Syntaxin-like protein fsv1 (fsv1) from Schizosaccharomyces pombe (strain 972 / ATCC 24843) (Fission yeast).